The chain runs to 1873 residues: Voltage-dependent L-type calcium channel subunit alpha-1S (1873 aa).

The interval 1–23 is disordered; it reads MEPSSPQDEGLRKKQPKKPLPEV. The Cytoplasmic portion of the chain corresponds to 1-51; it reads MEPSSPQDEGLRKKQPKKPLPEVLPRPPRALFCLTLQNPLRKACISIVEWK. An I repeat occupies 38–337; the sequence is NPLRKACISI…LVLGVLSGEF (300 aa). The helical transmembrane segment at 52 to 70 threads the bilayer; it reads PFETIILLTIFANCVALAV. Residues 71–85 are Extracellular-facing; it reads YLPMPEDDNNSLNLG. N79 is a glycosylation site (N-linked (GlcNAc...) asparagine). Residues 86–106 form a helical membrane-spanning segment; the sequence is LEKLEYFFLTVFSIEAAMKII. Over 107–115 the chain is Cytoplasmic; sequence AYGFLFHQD. The helical transmembrane segment at 116-136 threads the bilayer; that stretch reads AYLRSGWNVLDFIIVFLGVFT. Residues 137–160 lie on the Extracellular side of the membrane; that stretch reads AILEQVNVIQSNTAPMSSKGAGLD. A helical membrane pass occupies residues 161 to 179; that stretch reads VKALRAFRVLRPLRLVSGV. The Cytoplasmic portion of the chain corresponds to 180–196; sequence PSLQVVLNSIFKAMLPL. The helical transmembrane segment at 197-218 threads the bilayer; that stretch reads FHIALLVLFMVIIYAIIGLELF. The Extracellular segment spans residues 219–279; sequence KGKMHKTCYY…HGITHFDNFG (61 aa). 2 disulfide bridges follow: C226/C254 and C245/C261. N257 carries an N-linked (GlcNAc...) asparagine glycan. The pore-forming intramembrane region spans 280–301; that stretch reads FSMLTVYQCITMEGWTDVLYWV. A Selectivity filter of repeat I motif is present at residues 290–293; the sequence is TMEG. E292 is a Ca(2+) binding site. Topologically, residues 302–309 are extracellular; sequence NDAIGNEW. The helical transmembrane segment at 310 to 330 threads the bilayer; sequence PWIYFVTLILLGSFFILNLVL. Topologically, residues 331–432 are cytoplasmic; the sequence is GVLSGEFTKE…WKCHDLVKSR (102 aa). A binding to the beta subunit region spans residues 357–374; that stretch reads QQLEEDLRGYMSWITQGE. Phosphoserine occurs at positions 393 and 397. The II repeat unit spans residues 418 to 664; that stretch reads NRVFRWKCHD…VFLAIAVDNL (247 aa). The chain crosses the membrane as a helical span at residues 433–451; sequence VFYWLVILIVALNTLSIAS. Residues 452–462 are Extracellular-facing; sequence EHHNQPLWLTH. Residues 463–483 traverse the membrane as a helical segment; that stretch reads LQDIANRVLLSLFTIEMLLKM. Topologically, residues 484–494 are cytoplasmic; the sequence is YGLGLRQYFMS. A helical membrane pass occupies residues 495–514; sequence IFNRFDCFVVCSGILELLLV. Topologically, residues 515–523 are extracellular; sequence ESGAMTPLG. A helical transmembrane segment spans residues 524-542; sequence ISVLRCIRLLRLFKITKYW. Over 543-561 the chain is Cytoplasmic; the sequence is TSLSNLVASLLNSIRSIAS. A helical membrane pass occupies residues 562–581; sequence LLLLLFLFIIIFALLGMQLF. Over 582-601 the chain is Extracellular; sequence GGRYDFEDTEVRRSNFDNFP. Positions 602 to 623 form an intramembrane region, pore-forming; the sequence is QALISVFQVLTGEDWNSVMYNG. Residues 612–615 carry the Selectivity filter of repeat II motif; the sequence is TGED. E614 serves as a coordination point for Ca(2+). The Extracellular portion of the chain corresponds to 624–633; sequence IMAYGGPSYP. Residues 634-653 traverse the membrane as a helical segment; it reads GVLVCIYFIILFVCGNYILL. Residues 654–799 lie on the Cytoplasmic side of the membrane; that stretch reads NVFLAIAVDN…VLCHRIVNAT (146 aa). Disordered regions lie at residues 673–717 and 731–757; these read AQKA…IPTT and EVKDPYPSADFPGDDEEDEPEIPVSPR. S687 is modified (phosphoserine; by PKA). A compositionally biased stretch (basic and acidic residues) spans 690–711; the sequence is LPDKTEEEKSVMAKKLEQKPKG. Acidic residues predominate over residues 742–751; sequence PGDDEEDEPE. The interval 747–760 is interaction with STAC, STAC2 and STAC3 (via SH3 domains); sequence EDEPEIPVSPRPRP. The III repeat unit spans residues 786–1068; the sequence is NKVRVLCHRI…IFVGFVIVTF (283 aa). Residues 800 to 818 form a helical membrane-spanning segment; the sequence is WFTNFILLFILLSSAALAA. Over 819–830 the chain is Extracellular; it reads EDPIRAESVRNQ. Residues 831–850 traverse the membrane as a helical segment; it reads ILGYFDIAFTSVFTVEIVLK. Residues 851–866 are Cytoplasmic-facing; sequence MTTYGAFLHKGSFCRN. Residues 867–885 traverse the membrane as a helical segment; that stretch reads YFNILDLLVVAVSLISMGL. At 886 to 892 the chain is on the extracellular side; it reads ESSTISV. The chain crosses the membrane as a helical span at residues 893–911; that stretch reads VKILRVLRVLRPLRAINRA. Residues 912–930 are Cytoplasmic-facing; that stretch reads KGLKHVVQCVFVAIRTIGN. Residues 931–950 form a helical membrane-spanning segment; sequence IVLVTTLLQFMFACIGVQLF. The Extracellular segment spans residues 951–1000; sequence KGKFFSCNDLSKMTEEECRGYYYVYKDGDPTQMELRPRQWIHNDFHFDNV. C957 and C968 are joined by a disulfide. A dihydropyridine binding region spans residues 988–1077; the sequence is RQWIHNDFHF…FQEQGETEYK (90 aa). The pore-forming intramembrane region spans 1001 to 1021; sequence LSAMMSLFTVSTFEGWPQLLY. Residues 1012-1015 carry the Selectivity filter of repeat III motif; sequence TFEG. E1014 is a Ca(2+) binding site. Residues 1022–1038 lie on the Extracellular side of the membrane; that stretch reads RAIDSNEEDMGPVYNNR. Residues 1039-1060 traverse the membrane as a helical segment; sequence VEMAIFFIIYIILIAFFMMNIF. Over 1061–1118 the chain is Cytoplasmic; that stretch reads VGFVIVTFQEQGETEYKNCELDKNQRQCVQYALKARPLRCYIPKNPYQYQVWYVVTSS. The IV repeat unit spans residues 1105–1384; sequence NPYQYQVWYV…LFVAVIMDNF (280 aa). A helical transmembrane segment spans residues 1119–1140; sequence YFEYLMFALIMLNTICLGMQHY. Over 1141-1148 the chain is Extracellular; that stretch reads HQSEEMNH. Residues 1149 to 1170 traverse the membrane as a helical segment; the sequence is ISDILNVAFTIIFTLEMILKLL. Over 1171 to 1180 the chain is Cytoplasmic; it reads AFKARGYFGD. Residues 1181-1200 form a helical membrane-spanning segment; sequence PWNVFDFLIVIGSIIDVILS. Over 1201–1231 the chain is Extracellular; the sequence is EIDTFLASSGGLYCLGGGCGNVDPDESARIS. The chain crosses the membrane as a helical span at residues 1232-1250; sequence SAFFRLFRVMRLIKLLSRA. Residues 1251–1268 are Cytoplasmic-facing; the sequence is EGVRTLLWTFIKSFQALP. Residues 1269 to 1289 form a helical membrane-spanning segment; that stretch reads YVALLIVMLFFIYAVIGMQMF. Residues 1290-1311 are Extracellular-facing; that stretch reads GKIALVDGTQINRNNNFQTFPQ. Positions 1312–1330 form an intramembrane region, pore-forming; it reads AVLLLFRCATGEAWQEILL. A Selectivity filter of repeat IV motif is present at residues 1321–1324; sequence TGEA. Topologically, residues 1331 to 1356 are extracellular; sequence ACSYGKLCDPESDYAPGEEYTCGTNF. The interval 1337 to 1403 is dihydropyridine binding; that stretch reads LCDPESDYAP…LGPHHLDEFK (67 aa). C1338 and C1352 form a disulfide bridge. The interval 1349-1391 is phenylalkylamine binding; that stretch reads EYTCGTNFAYYYFISFYMLCAFLIINLFVAVIMDNFDYLTRDW. Residues 1357–1381 form a helical membrane-spanning segment; that stretch reads AYYYFISFYMLCAFLIINLFVAVIM. Residues 1382 to 1873 lie on the Cytoplasmic side of the membrane; that stretch reads DNFDYLTRDW…SQETLIPPRP (492 aa). The interaction with calmodulin stretch occupies residues 1522 to 1542; that stretch reads KFYATFLIQEHFRKFMKRQEE. Residue S1575 is modified to Phosphoserine; by PKA and CAMK2. Phosphothreonine; by CK2 is present on T1579. S1617 is subject to Phosphoserine; by PKA. 2 disordered regions span residues 1689-1782 and 1841-1873; these read EFPG…RPAP and GMASVPGSLSRRSSLGSLDQVQGSQETLIPPRP. Low complexity predominate over residues 1847-1858; sequence GSLSRRSSLGSL.

Belongs to the calcium channel alpha-1 subunit (TC 1.A.1.11) family. CACNA1S subfamily. Component of a calcium channel complex consisting of a pore-forming alpha subunit (CACNA1S) and the ancillary subunits CACNB1 or CACNB2, CACNG1 and CACNA2D1. The channel complex contains alpha, beta, gamma and delta subunits in a 1:1:1:1 ratio, i.e. it contains either CACNB1 or CACNB2. CACNA1S channel activity is modulated by the auxiliary subunits (CACNB1 or CACNB2, CACNG1 and CACNA2D1). Interacts with DYSF and JSRP1. Interacts with RYR1. Interacts with STAC, STAC2 and STAC3 (via their SH3 domains). Interaction with STAC3 promotes expression at the cell membrane. Interaction with STAC2 promotes expression at the cell membrane, but with much lower efficiency than STAC3. Interaction with STAC1 leads to very low levels expression at the cell membrane, much less than the levels observed upon interaction with STAC3 and STAC2. Interacts with CALM. The alpha-1S subunit is found in two isoforms in the skeletal muscle: a minor form of 212 kDa containing the complete amino acid sequence, and a major form of 190 kDa derived from the full-length form by post-translational proteolysis close to Phe-1690. Post-translationally, phosphorylated. Phosphorylation by PKA activates the calcium channel. Both the minor and major forms are phosphorylated in vitro by PKA. Phosphorylation at Ser-1575 is involved in beta-adrenergic-mediated regulation of the channel. As to expression, detected in skeletal muscle T-tubules (at protein level).

It is found in the cell membrane. The protein localises to the sarcolemma. It localises to the T-tubule. The catalysed reaction is Ca(2+)(in) = Ca(2+)(out). With respect to regulation, channel activity is blocked by dihydropyridines (DHP), phenylalkylamines, and by benzothiazepines. Functionally, pore-forming, alpha-1S subunit of the voltage-gated calcium channel that gives rise to L-type calcium currents in skeletal muscle. Calcium channels containing the alpha-1S subunit play an important role in excitation-contraction coupling in skeletal muscle via their interaction with RYR1, which triggers Ca(2+) release from the sarcplasmic reticulum and ultimately results in muscle contraction. Long-lasting (L-type) calcium channels belong to the 'high-voltage activated' (HVA) group. The polypeptide is Voltage-dependent L-type calcium channel subunit alpha-1S (CACNA1S) (Oryctolagus cuniculus (Rabbit)).